The sequence spans 495 residues: Potassium voltage-gated channel subfamily A member 1 (495 aa).

Residues 1–30 (MTVMSGENADEASTAPGHPQDGSYPRQADH) form a disordered region. Residues 1–128 (MTVMSGENAD…FYELGEEAME (128 aa)) form a tetramerization domain region. Topologically, residues 1–164 (MTVMSGENAD…LLFEYPESSG (164 aa)) are cytoplasmic. Residue serine 23 is modified to Phosphoserine. A helical membrane pass occupies residues 165–186 (PARVIAIVSVMVILISIVIFCL). Residues 187–220 (ETLPELKDDKDFTGTIHRIDNTTVIYTSNIFTDP) lie on the Extracellular side of the membrane. An N-linked (GlcNAc...) asparagine glycan is attached at asparagine 207. Residues 221 to 242 (FFIVETLCIIWFSFELVVRFFA) form a helical membrane-spanning segment. Cysteine 243 carries the S-palmitoyl cysteine lipid modification. Over 243 to 253 (CPSKTDFFKNI) the chain is Cytoplasmic. A helical transmembrane segment spans residues 254-274 (MNFIDIVAIIPYFITLGTEIA). The Extracellular segment spans residues 275–287 (EQEGNQKGEQATS). The helical; Voltage-sensor transmembrane segment at 288–308 (LAILRVIRLVRVFRIFKLSRH) threads the bilayer. Topologically, residues 309-323 (SKGLQILGQTLKASM) are cytoplasmic. The S4-S5 linker stretch occupies residues 310–323 (KGLQILGQTLKASM). Residue serine 322 is modified to Phosphoserine; by PKA. Residues 324-345 (RELGLLIFFLFIGVILFSSAVY) traverse the membrane as a helical segment. Residues 346–359 (FAEAEEAESHFSSI) are Extracellular-facing. An intramembrane region (helical) is located at residues 360–371 (PDAFWWAVVSMT). The Selectivity filter signature appears at 372-377 (TVGYGD). The stretch at 372–379 (TVGYGDMY) is an intramembrane region. Residues 380–386 (PVTIGGK) are Extracellular-facing. Residues 387–415 (IVGSLCAIAGVLTIALPVPVIVSNFNYFY) traverse the membrane as a helical segment. At 416–495 (HRETEGEEQA…VNKSKLLTDV (80 aa)) the chain is on the cytoplasmic side. Residues serine 437 and serine 439 each carry the phosphoserine modification. Serine 446 is modified (phosphoserine; by PKA). Positions 493 to 495 (TDV) match the PDZ-binding motif.

This sequence belongs to the potassium channel family. A (Shaker) (TC 1.A.1.2) subfamily. Kv1.1/KCNA1 sub-subfamily. Homotetramer and heterotetramer with other channel-forming alpha subunits, such as KCNA2, KCNA4, KCNA5, KCNA6 and KCNA7. Channel activity is regulated by interaction with the beta subunits KCNAB1 and KCNAB2. Identified in a complex with KCNA2 and KCNAB2. Interacts (via C-terminus) with the PDZ domains of DLG1, DLG2 and DLG4. Interacts with LGI1 within a complex containing LGI1, KCNA4 and KCNAB1. Interacts (via N-terminus) with STX1A; this promotes channel inactivation. Interacts (via N-terminus) with the heterodimer formed by GNB1 and GNG2; this promotes channel inactivation. Can interact simultaneously with STX1A and the heterodimer formed by GNB1 and GNG2. Interacts (via cytoplasmic N-terminal domain) with KCNRG; this inhibits channel activity. Interacts with ANK3; this inhibits channel activity. Interacts with ADAM11. In terms of processing, N-glycosylated. Palmitoylated on Cys-243; which may be required for membrane targeting. Post-translationally, phosphorylated on tyrosine residues. Phosphorylation increases in response to NRG1; this inhibits channel activity. Phosphorylation at Ser-446 regulates channel activity by down-regulating expression at the cell membrane. Detected in brain. Expressed in cerebellar cortex basket cell terminals, the area surround the Purkinje cell soma, and the pinceaux expansions encircling the axon initial segment (at protein level). Detected in the juxtaparanodal regions of the nodes of Ranvier in myelinated axons. Detected in the paranodal region in sciatic nerve. Detected on cell bodies in cerebellum, dorsal and ventral cochlear nucleus, pontine reticular nucleus, mesencephalic trigeminal nucleus, motor trigeminal nucleus and the pricipal sensory trigeminal nucleus. Detected in terminal fields of basket cells in the cerebellum corpus medullare. Detected in hippocampus CA3 pyramidal neurons and in the hilus and stratum moleculare of the dentate gyrus. Detected in the central nucleus and the external nucleus of the inferior colliculus. Detected in fiber tracts in the optic tract, external medullary lamina, stria terminalis, medulla, ventral pallidum and substantia nigra. Detected in neurons from dorsal root ganglion. Detected in neurons in the medial nucleus of the trapezoid body. Detected in midbrain dopamine neuron axon terminals. Detected in brain cortex. Detected in brainstem. Detected in juxtaparanodal regions of the nodes of Ranvier in the vagus nerve, but only at very low levels in the heart. Detected in the islet of Langerhans. Detected at the luminal membrane in distal convoluted tubules in the kidney (at protein level). Detected in hippocampus, thalamus, neocortex and ventral brain cortex, including the piriform and entorhinal cortex and the amygdala. Detected in midbrain dopamine neurons. Detected in heart atrium, ventricle, sinoatrial node and atrioventricular node.

The protein resides in the cell membrane. Its subcellular location is the cell projection. It is found in the axon. It localises to the membrane. The protein localises to the perikaryon. The protein resides in the dendrite. Its subcellular location is the cell junction. It is found in the synapse. It localises to the cytoplasmic vesicle. The protein localises to the endoplasmic reticulum. The protein resides in the presynaptic cell membrane. Its subcellular location is the presynapse. The catalysed reaction is K(+)(in) = K(+)(out). Its activity is regulated as follows. Inhibited by 4-aminopyridine (4-AP), tetraethylammonium (TEA) and dendrotoxin (DTX), but not by charybdotoxin (CTX). Functionally, voltage-gated potassium channel that mediates transmembrane potassium transport in excitable membranes, primarily in the brain and the central nervous system, but also in the kidney. Contributes to the regulation of the membrane potential and nerve signaling, and prevents neuronal hyperexcitability. Forms tetrameric potassium-selective channels through which potassium ions pass in accordance with their electrochemical gradient. The channel alternates between opened and closed conformations in response to the voltage difference across the membrane. Can form functional homotetrameric channels and heterotetrameric channels that contain variable proportions of KCNA1, KCNA2, KCNA4, KCNA5, KCNA6, KCNA7, and possibly other family members as well; channel properties depend on the type of alpha subunits that are part of the channel. Channel properties are modulated by cytoplasmic beta subunits that regulate the subcellular location of the alpha subunits and promote rapid inactivation of delayed rectifier potassium channels. In vivo, membranes probably contain a mixture of heteromeric potassium channel complexes, making it difficult to assign currents observed in intact tissues to any particular potassium channel family member. Homotetrameric KCNA1 forms a delayed-rectifier potassium channel that opens in response to membrane depolarization, followed by slow spontaneous channel closure. In contrast, a heterotetrameric channel formed by KCNA1 and KCNA4 shows rapid inactivation. Regulates neuronal excitability in hippocampus, especially in mossy fibers and medial perforant path axons, preventing neuronal hyperexcitability. May function as down-stream effector for G protein-coupled receptors and inhibit GABAergic inputs to basolateral amygdala neurons. May contribute to the regulation of neurotransmitter release, such as gamma-aminobutyric acid (GABA) release. Plays a role in regulating the generation of action potentials and preventing hyperexcitability in myelinated axons of the vagus nerve, and thereby contributes to the regulation of heart contraction. Required for normal neuromuscular responses. Regulates the frequency of neuronal action potential firing in response to mechanical stimuli, and plays a role in the perception of pain caused by mechanical stimuli, but does not play a role in the perception of pain due to heat stimuli. Required for normal responses to auditory stimuli and precise location of sound sources, but not for sound perception. The use of toxins that block specific channels suggest that it contributes to the regulation of the axonal release of the neurotransmitter dopamine. Required for normal postnatal brain development and normal proliferation of neuronal precursor cells in the brain. Plays a role in the reabsorption of Mg(2+) in the distal convoluted tubules in the kidney and in magnesium ion homeostasis, probably via its effect on the membrane potential. This Mus musculus (Mouse) protein is Potassium voltage-gated channel subfamily A member 1.